The sequence spans 251 residues: uncharacterized protein (251 aa).

This sequence belongs to the FAM243 family.

This is an uncharacterized protein from Mus musculus (Mouse).